We begin with the raw amino-acid sequence, 227 residues long: PKHD-type hydroxylase Mnod_1077 (227 aa).

The Fe2OG dioxygenase domain occupies 78 to 178; that stretch reads RVLPPLFNRY…RWSAFFWSQS (101 aa). 3 residues coordinate Fe cation: His-96, Asp-98, and His-159. Arg-169 contributes to the 2-oxoglutarate binding site.

It depends on Fe(2+) as a cofactor. L-ascorbate is required as a cofactor.

The polypeptide is PKHD-type hydroxylase Mnod_1077 (Methylobacterium nodulans (strain LMG 21967 / CNCM I-2342 / ORS 2060)).